We begin with the raw amino-acid sequence, 108 residues long: UPF0145 protein Fnod_0426 (108 aa).

Belongs to the UPF0145 family.

In Fervidobacterium nodosum (strain ATCC 35602 / DSM 5306 / Rt17-B1), this protein is UPF0145 protein Fnod_0426.